Reading from the N-terminus, the 145-residue chain is Prefoldin subunit alpha (145 aa).

This sequence belongs to the prefoldin alpha subunit family. In terms of assembly, heterohexamer of two alpha and four beta subunits.

It is found in the cytoplasm. Its function is as follows. Molecular chaperone capable of stabilizing a range of proteins. Seems to fulfill an ATP-independent, HSP70-like function in archaeal de novo protein folding. In Nitrosopumilus maritimus (strain SCM1), this protein is Prefoldin subunit alpha.